We begin with the raw amino-acid sequence, 326 residues long: Olfactory receptor 11H12 (326 aa).

The Extracellular segment spans residues 1–44; it reads MCPLTLQVTGLMNVSEPNSSFAFVNEFILQGFTCEWTIQIFLFS. 2 N-linked (GlcNAc...) asparagine glycosylation sites follow: asparagine 13 and asparagine 18. Residues 45–65 traverse the membrane as a helical segment; the sequence is LFTTTYALTITGNGAIAFVLW. Residues 66–72 are Cytoplasmic-facing; it reads CDWRLHT. A helical membrane pass occupies residues 73 to 93; the sequence is PMYMFLGNFSFLEIWYVSSTV. Residues 94–112 are Extracellular-facing; the sequence is PKMLVNFLSEKKNISFAGC. A glycan (N-linked (GlcNAc...) asparagine) is linked at asparagine 106. Cysteine 112 and cysteine 194 are oxidised to a cystine. The helical transmembrane segment at 113–133 threads the bilayer; that stretch reads FLQFYFFFSLGTSECLLLTVM. Residues 134 to 158 lie on the Cytoplasmic side of the membrane; that stretch reads AFDQYLAICRPLLYPNIMTGHLCAK. A helical membrane pass occupies residues 159 to 179; sequence LVILCWVCGFLWFLIPIVLIS. Over 180 to 216 the chain is Extracellular; it reads QMPFCGPNIIDHVVCDPGPRFALDCVSAPRIQLFCYT. The chain crosses the membrane as a helical span at residues 217-237; the sequence is LSSLVIFGNFLFIIGSYTLVL. The Cytoplasmic segment spans residues 238–259; sequence KAVLGMPSSTGRHKAFSTCGSH. The chain crosses the membrane as a helical span at residues 260–280; sequence LAVVSLCYSSLMVMYVSPGLG. Topologically, residues 281–287 are extracellular; it reads HSTGMQK. Residues 288–308 form a helical membrane-spanning segment; it reads IETLFYAMVTPLFNPLIYSLQ. Over 309–326 the chain is Cytoplasmic; sequence NKEIKAALRKVLGSSNII.

The protein belongs to the G-protein coupled receptor 1 family.

Its subcellular location is the cell membrane. Functionally, odorant receptor. The chain is Olfactory receptor 11H12 (OR11H12) from Homo sapiens (Human).